The primary structure comprises 1696 residues: PH domain leucine-rich repeat protein phosphatase 1 (1696 aa).

At Met1 the chain carries N-acetylmethionine. Disordered regions lie at residues 1-97 (MEPA…GGGA) and 222-398 (LGHG…VVGE). Over residues 79–92 (VPQPAAGGAAPVTA) the composition is skewed to low complexity. Positions 313–325 (DTESFSLSPSAES) are enriched in polar residues. The residue at position 378 (Ser378) is a Phosphoserine. A PH domain is found at 499-599 (RIQLSGMYNV…WLRQVSKVAS (101 aa)). LRR repeat units lie at residues 601 to 622 (RISS…LFYS), 624 to 645 (DLTH…PAAR), 655 to 676 (KLKS…VCSI), 678 to 699 (TLAE…VGAM), 701 to 722 (NLQT…LENM), 724 to 746 (QLSY…EKLT), 836 to 857 (FLKA…PVPN), 858 to 879 (YLSY…VCES), 881 to 902 (KLEV…LFCN), 904 to 925 (SLRK…LERT), 926 to 947 (SVEV…LLMK), 950 to 971 (SLRF…TLSE), 976 to 996 (ILQE…PLLT), 1000 to 1021 (RLKI…KMAK), 1024 to 1045 (ELEE…IMNC), 1047 to 1068 (RMHT…MQLP), 1069 to 1090 (EVKC…ENLP), and 1092 to 1113 (KLQE…SLEL). The 248-residue stretch at 1138 to 1385 (SHGYTEASGV…DSISAVVVQL (248 aa)) folds into the PPM-type phosphatase domain. The Mn(2+) site is built by Asp1173, Gly1174, Lys1337, and Asp1376. Disordered regions lie at residues 1422 to 1473 (RPSD…SPAY) and 1610 to 1696 (KPGG…DTPL). Composition is skewed to low complexity over residues 1431 to 1452 (SSSS…MSSE), 1647 to 1660 (QQQQ…QQQQ), and 1670 to 1680 (QAQAQAQAQAQ). Positions 1694 to 1696 (TPL) match the PDZ-binding motif.

In terms of assembly, interacts with the nucleotide free form of K-Ras (KRAS) via its LRR repeats. Interacts with AKT2, AKT3 and PRKCB isoform beta-II. Interacts with WDR48 and USP12. Requires Mn(2+) as cofactor. As to expression, mainly present in brain (at protein level). Isoform 2 is more abundant in adult brain neurons than isoform 1 in. Isoforms 1 and 2 are expressed in the retina but not found in rod outer segments.

It is found in the cytoplasm. The protein localises to the membrane. The protein resides in the cell membrane. Its subcellular location is the nucleus. It localises to the nucleoplasm. It is found in the nucleus membrane. It catalyses the reaction O-phospho-L-seryl-[protein] + H2O = L-seryl-[protein] + phosphate. It carries out the reaction O-phospho-L-threonyl-[protein] + H2O = L-threonyl-[protein] + phosphate. Its activity is regulated as follows. Insensitive to okadaic acid. Deubiquitination by WDR48-USP12 complex positively regulates PHLPP1 stability. Its function is as follows. Protein phosphatase involved in regulation of Akt and PKC signaling. Mediates dephosphorylation in the C-terminal domain hydrophobic motif of members of the AGC Ser/Thr protein kinase family; specifically acts on 'Ser-473' of AKT2 and AKT3, 'Ser-660' of PRKCB and 'Ser-657' of PRKCA. Isoform 2 seems to have a major role in regulating Akt signaling in hippocampal neurons while isoform 1 may promote Akt and PKC activation and inhibit ERK signaling. Akt regulates the balance between cell survival and apoptosis through a cascade that primarily alters the function of transcription factors that regulate pro- and antiapoptotic genes. Dephosphorylation of 'Ser-473' of Akt triggers apoptosis and suppression of tumor growth. Dephosphorylation of PRKCA and PRKCB leads to their destabilization and degradation. Dephosphorylates STK4 on 'Thr-387' leading to STK4 activation and apoptosis. Dephosphorylates RPS6KB1 and is involved in regulation of cap-dependent translation. Inhibits cancer cell proliferation and may act as a tumor suppressor. Dephosphorylates RAF1 inhibiting its kinase activity. May act as a negative regulator of K-Ras signaling in membrane rafts. Involved in the hippocampus-dependent long-term memory formation. Involved in circadian control by regulating the consolidation of circadian periodicity after resetting. Involved in development and function of regulatory T-cells. In Rattus norvegicus (Rat), this protein is PH domain leucine-rich repeat protein phosphatase 1 (Phlpp1).